The following is a 291-amino-acid chain: MADLDDIKDGKDFGIGIPQQNPAFTLKGSGSLDWGMQSRLARIFNPKTNRTVMLAFDHGYFQGPTTGLERIDINIAPLFEYADVLMCTRGILRSVVPAAANRPVVLRASGANSILTDLSNEAVAVAMEDAVRLNACAVAAQVYIGTEHEHQSIKNIIQLIDQGMRYGMPTMAVTGVGKDMVRDQRYFSLASRIAAEMGAQVIKTYYVDSGFERIAAGCPVPIVIAGGKKLPERDALEMCYQAIDQGASGVDMGRNIFQSDAPIAMLKAVHAIVHKNENAAAAYQLFLHEQN.

Catalysis depends on K203, which acts as the Schiff-base intermediate with substrate.

The protein belongs to the DeoC/FbaB aldolase family. As to quaternary structure, homodecamer.

The protein localises to the cytoplasm. It catalyses the reaction dihydroxyacetone phosphate + acetyl-CoA = 3-hydroxy-2,4-dioxopentyl phosphate + CoA. In terms of biological role, involved in the degradation of phospho-AI-2, thereby terminating induction of the lsr operon and closing the AI-2 signaling cycle. Catalyzes the transfer of an acetyl moiety from 3-hydroxy-5-phosphonooxypentane-2,4-dione to CoA to form glycerone phosphate and acetyl-CoA. The protein is 3-hydroxy-5-phosphonooxypentane-2,4-dione thiolase of Yersinia pseudotuberculosis serotype O:1b (strain IP 31758).